We begin with the raw amino-acid sequence, 441 residues long: Ribosomal protein uS12 methylthiotransferase RimO (441 aa).

One can recognise an MTTase N-terminal domain in the interval 7–117; it reads PKISFVSLGC…VLEAVHRAKP (111 aa). Positions 16, 52, 81, 148, 152, and 155 each coordinate [4Fe-4S] cluster. The Radical SAM core domain occupies 134 to 371; the sequence is LTPRHYAYLK…MARQQVISAR (238 aa). A TRAM domain is found at 374-440; the sequence is KRKVGTRQQI…AYDLHGTVAG (67 aa).

Belongs to the methylthiotransferase family. RimO subfamily. Requires [4Fe-4S] cluster as cofactor.

It is found in the cytoplasm. The enzyme catalyses L-aspartate(89)-[ribosomal protein uS12]-hydrogen + (sulfur carrier)-SH + AH2 + 2 S-adenosyl-L-methionine = 3-methylsulfanyl-L-aspartate(89)-[ribosomal protein uS12]-hydrogen + (sulfur carrier)-H + 5'-deoxyadenosine + L-methionine + A + S-adenosyl-L-homocysteine + 2 H(+). In terms of biological role, catalyzes the methylthiolation of an aspartic acid residue of ribosomal protein uS12. The chain is Ribosomal protein uS12 methylthiotransferase RimO from Rhodopseudomonas palustris (strain BisB5).